Here is a 152-residue protein sequence, read N- to C-terminus: Transcriptional regulator MraZ (152 aa).

2 consecutive SpoVT-AbrB domains span residues 5-52 (ATLV…TLPE) and 81-124 (ASEC…DETT).

Belongs to the MraZ family. Forms oligomers.

It localises to the cytoplasm. The protein resides in the nucleoid. Its function is as follows. Negatively regulates its own expression and that of the subsequent genes in the proximal part of the division and cell wall (dcw) gene cluster. Acts by binding directly to DNA. May also regulate the expression of genes outside the dcw cluster. The protein is Transcriptional regulator MraZ of Enterobacter sp. (strain 638).